The sequence spans 258 residues: Undecaprenyl-diphosphatase (258 aa).

The next 8 helical transmembrane spans lie at 1–21 (MSII…FLPV), 42–62 (LKCF…FTFF), 71–91 (LWIK…LLYS), 96–116 (LFSQ…FIVV), 134–154 (GISY…MVPG), 173–193 (QTAA…ATFY), 211–231 (LFLL…KMFL), and 237–257 (FDYI…MFFV).

The protein belongs to the UppP family.

The protein resides in the cell inner membrane. The catalysed reaction is di-trans,octa-cis-undecaprenyl diphosphate + H2O = di-trans,octa-cis-undecaprenyl phosphate + phosphate + H(+). In terms of biological role, catalyzes the dephosphorylation of undecaprenyl diphosphate (UPP). Confers resistance to bacitracin. This Campylobacter hominis (strain ATCC BAA-381 / DSM 21671 / CCUG 45161 / LMG 19568 / NCTC 13146 / CH001A) protein is Undecaprenyl-diphosphatase.